We begin with the raw amino-acid sequence, 739 residues long: UPF0313 protein YgiQ (739 aa).

The 279-residue stretch at 372–650 folds into the Radical SAM core domain; sequence AYEMIRFSVN…KALLRYHDPA (279 aa). Positions 386, 390, and 393 each coordinate [4Fe-4S] cluster. Residues 685-739 form a disordered region; sequence REARRQNRNTRPALTKHTPMATQRQTPATAKKASSTQSRPVNAGAKKRPKAAVGR. A compositionally biased stretch (polar residues) spans 704–724; it reads MATQRQTPATAKKASSTQSRP. Over residues 729–739 the composition is skewed to basic residues; sequence AKKRPKAAVGR.

The protein belongs to the UPF0313 family. [4Fe-4S] cluster is required as a cofactor.

The sequence is that of UPF0313 protein YgiQ (ygiQ) from Escherichia coli (strain K12).